The primary structure comprises 341 residues: Glycerol-3-phosphate dehydrogenase [NAD(P)+] (341 aa).

4 residues coordinate NADPH: serine 17, tryptophan 18, arginine 37, and lysine 112. Residues lysine 112 and glycine 140 each contribute to the sn-glycerol 3-phosphate site. Residue alanine 144 coordinates NADPH. Residues lysine 195, aspartate 248, serine 258, arginine 259, and asparagine 260 each contribute to the sn-glycerol 3-phosphate site. Residue lysine 195 is the Proton acceptor of the active site. Arginine 259 lines the NADPH pocket. The NADPH site is built by valine 283 and glutamate 285.

The protein belongs to the NAD-dependent glycerol-3-phosphate dehydrogenase family.

The protein resides in the cytoplasm. The enzyme catalyses sn-glycerol 3-phosphate + NAD(+) = dihydroxyacetone phosphate + NADH + H(+). The catalysed reaction is sn-glycerol 3-phosphate + NADP(+) = dihydroxyacetone phosphate + NADPH + H(+). Its pathway is membrane lipid metabolism; glycerophospholipid metabolism. Catalyzes the reduction of the glycolytic intermediate dihydroxyacetone phosphate (DHAP) to sn-glycerol 3-phosphate (G3P), the key precursor for phospholipid synthesis. The polypeptide is Glycerol-3-phosphate dehydrogenase [NAD(P)+] (Mycobacterium avium (strain 104)).